Consider the following 292-residue polypeptide: 4-hydroxy-tetrahydrodipicolinate synthase (292 aa).

Residue T45 coordinates pyruvate. Y133 functions as the Proton donor/acceptor in the catalytic mechanism. K161 acts as the Schiff-base intermediate with substrate in catalysis. Position 203 (I203) interacts with pyruvate.

It belongs to the DapA family. Homotetramer; dimer of dimers.

The protein resides in the cytoplasm. It catalyses the reaction L-aspartate 4-semialdehyde + pyruvate = (2S,4S)-4-hydroxy-2,3,4,5-tetrahydrodipicolinate + H2O + H(+). It functions in the pathway amino-acid biosynthesis; L-lysine biosynthesis via DAP pathway; (S)-tetrahydrodipicolinate from L-aspartate: step 3/4. Functionally, catalyzes the condensation of (S)-aspartate-beta-semialdehyde [(S)-ASA] and pyruvate to 4-hydroxy-tetrahydrodipicolinate (HTPA). This is 4-hydroxy-tetrahydrodipicolinate synthase from Herminiimonas arsenicoxydans.